A 427-amino-acid chain; its full sequence is Ribitol transporter (427 aa).

At 1–7 the chain is on the cytoplasmic side; that stretch reads MSVNNKQ. The helical transmembrane segment at 8 to 28 threads the bilayer; that stretch reads WYGLPLNLIWGYVAIAVFMTG. The Extracellular segment spans residues 29–51; it reads DGFELAFLSHYIKALGFTPAQAS. Residues 52–72 traverse the membrane as a helical segment; sequence FAFTLYGLAAALSAWVSGVVA. Residues 73-79 are Cytoplasmic-facing; it reads EIITPRK. Residues 80-100 form a helical membrane-spanning segment; it reads AMLIGFVLWCVFHVLFLVFGL. Residues 101-107 lie on the Extracellular side of the membrane; the sequence is GRANYAL. A helical transmembrane segment spans residues 108–128; it reads ILLFYGIRGLAYPLFLYSFIV. The Cytoplasmic portion of the chain corresponds to 129–141; the sequence is AIIHNVRSDSSSS. A helical membrane pass occupies residues 142–162; it reads ALGWFWAVYSVGIGVFGSYIP. Over 163–171 the chain is Extracellular; sequence SFTIPHIGE. The helical transmembrane segment at 172–192 threads the bilayer; sequence MGTLWLALLFCATGGIIALVS. The Cytoplasmic portion of the chain corresponds to 193 to 238; it reads MRHTETPRHMQNLTTREKFAELGRAATLLYTNRSILFSSIVRIINT. The helical transmembrane segment at 239–259 threads the bilayer; that stretch reads LSLFGFAVIMPMMFVDELGFT. Over 260 to 263 the chain is Extracellular; it reads TSEW. The chain crosses the membrane as a helical span at residues 264–284; sequence LQVWAAFFFTTIFSNVFWGIV. Residues 285–295 are Cytoplasmic-facing; that stretch reads AEKMGWMKVIR. Residues 296 to 316 form a helical membrane-spanning segment; it reads WFGCIGMALSSLAFYYLPQHF. The Extracellular segment spans residues 317–323; the sequence is GHNFAMA. The chain crosses the membrane as a helical span at residues 324-344; sequence LVPAIALGIFVAAFVPMAAVF. Topologically, residues 345–360 are cytoplasmic; it reads PALEPNHKGAAISVYN. The chain crosses the membrane as a helical span at residues 361-381; that stretch reads LSAGLSNFLAPAIAVVLLPYF. Residues 382–383 are Extracellular-facing; it reads ST. Residues 384-404 traverse the membrane as a helical segment; that stretch reads IGVVIAYTALYILAFFLCPLI. The Cytoplasmic segment spans residues 405–427; that stretch reads RVEQPGFTSDQHAKPFTANAAES.

It belongs to the major facilitator superfamily. Sugar transporter (TC 2.A.1.1) family. CsbX subfamily.

Its subcellular location is the cell membrane. This chain is Ribitol transporter (rbtT), found in Klebsiella pneumoniae.